We begin with the raw amino-acid sequence, 317 residues long: Phosphatidylglycerol--prolipoprotein diacylglyceryl transferase 2 (317 aa).

The next 4 helical transmembrane spans lie at Ile-19–Gly-39, Gly-51–Tyr-71, Val-93–Ile-113, and Ile-120–Gly-140. Arg-141 is an a 1,2-diacyl-sn-glycero-3-phospho-(1'-sn-glycerol) binding site. 3 consecutive transmembrane segments (helical) span residues Pro-180–Ala-200, Phe-211–Ile-230, and Leu-241–Ala-261. The interval Gly-275–Ser-317 is disordered. Polar residues predominate over residues Pro-299–Ser-317.

The protein belongs to the Lgt family.

Its subcellular location is the cell membrane. It carries out the reaction L-cysteinyl-[prolipoprotein] + a 1,2-diacyl-sn-glycero-3-phospho-(1'-sn-glycerol) = an S-1,2-diacyl-sn-glyceryl-L-cysteinyl-[prolipoprotein] + sn-glycerol 1-phosphate + H(+). The protein operates within protein modification; lipoprotein biosynthesis (diacylglyceryl transfer). In terms of biological role, catalyzes the transfer of the diacylglyceryl group from phosphatidylglycerol to the sulfhydryl group of the N-terminal cysteine of a prolipoprotein, the first step in the formation of mature lipoproteins. The protein is Phosphatidylglycerol--prolipoprotein diacylglyceryl transferase 2 of Streptomyces coelicolor (strain ATCC BAA-471 / A3(2) / M145).